The chain runs to 374 residues: Serpin B8 (374 aa).

The protein belongs to the serpin family. Ov-serpin subfamily.

It is found in the cytoplasm. Its function is as follows. Has an important role in epithelial desmosome-mediated cell-cell adhesion. This chain is Serpin B8 (SERPINB8), found in Bos taurus (Bovine).